Here is a 183-residue protein sequence, read N- to C-terminus: MSTQDSAKITTVEHRRNIYLVGLMGAGKTTVGRQLARRLSRPFFDTDHEIVERTGVPIPTIFEIEGEEGFRRREAQTIYDLTAENNIVLATGGGVVINPENRRRLHDTGWVVYLNVSPVLLYERTRHDRNRPLLRVEDPLAKLEELHSIRDPLYREVAHIVVDGSHLVASGIVQYLLREFNRL.

25-30 (GAGKTT) serves as a coordination point for ATP. Threonine 29 lines the Mg(2+) pocket. Positions 47, 71, and 93 each coordinate substrate. Arginine 131 is an ATP binding site. Arginine 150 contributes to the substrate binding site.

The protein belongs to the shikimate kinase family. In terms of assembly, monomer. Mg(2+) serves as cofactor.

It localises to the cytoplasm. The catalysed reaction is shikimate + ATP = 3-phosphoshikimate + ADP + H(+). It functions in the pathway metabolic intermediate biosynthesis; chorismate biosynthesis; chorismate from D-erythrose 4-phosphate and phosphoenolpyruvate: step 5/7. Catalyzes the specific phosphorylation of the 3-hydroxyl group of shikimic acid using ATP as a cosubstrate. The chain is Shikimate kinase from Dechloromonas aromatica (strain RCB).